The following is a 264-amino-acid chain: MSKITSSTLRTFKQEGKKFTALTAYDASFASAFDSEGIDVLLVGDSMGMVLQGHSDTLPVTVDDIAYHTRCVRRGIEHSLLIADMPFMSYATPEQTMVNATTLMQAGASMVKVEGGHWLLESVAMLTERGIPVCAHLGLTPQSVHVFGGFKVQGRDADNAQRILDEAKALEAAGAQLLVVECIPASLAKAITQALTIPVIGIGAGKDTDGQILVMHDVLGISSGYIPRFSKNYLKQTGEIRAAVRAYIDEVAQGVFPGDEHTFN.

Residues D45 and D84 each coordinate Mg(2+). 3-methyl-2-oxobutanoate-binding positions include 45–46 (DS), D84, and K112. A Mg(2+)-binding site is contributed by E114. The active-site Proton acceptor is the E181.

It belongs to the PanB family. In terms of assembly, homodecamer; pentamer of dimers. The cofactor is Mg(2+).

Its subcellular location is the cytoplasm. The enzyme catalyses 3-methyl-2-oxobutanoate + (6R)-5,10-methylene-5,6,7,8-tetrahydrofolate + H2O = 2-dehydropantoate + (6S)-5,6,7,8-tetrahydrofolate. It functions in the pathway cofactor biosynthesis; (R)-pantothenate biosynthesis; (R)-pantoate from 3-methyl-2-oxobutanoate: step 1/2. Catalyzes the reversible reaction in which hydroxymethyl group from 5,10-methylenetetrahydrofolate is transferred onto alpha-ketoisovalerate to form ketopantoate. The chain is 3-methyl-2-oxobutanoate hydroxymethyltransferase from Shewanella halifaxensis (strain HAW-EB4).